We begin with the raw amino-acid sequence, 833 residues long: Mannosyl-oligosaccharide glucosidase (833 aa).

At 1 to 10 the chain is on the cytoplasmic side; the sequence is MLISKSKMFK. The chain crosses the membrane as a helical; Signal-anchor for type II membrane protein span at residues 11–28; that stretch reads TFWILTSIVLLASATVDI. Residues 29–833 are Lumenal-facing; that stretch reads SKLQEFEEYQ…ALVVNILGRF (805 aa). Residues asparagine 42 and asparagine 122 each coordinate substrate. N-linked (GlcNAc...) asparagine glycans are attached at residues asparagine 42, asparagine 122, and asparagine 135. Position 143 (glutamate 143) interacts with substrate. Aspartate 601 acts as the Proton donor in catalysis. Cysteine 669 and cysteine 685 form a disulfide bridge. Asparagine 787 carries an N-linked (GlcNAc...) asparagine glycan. Glutamate 804 acts as the Proton acceptor in catalysis.

Belongs to the glycosyl hydrolase 63 family. N-glycosylated.

It is found in the endoplasmic reticulum membrane. It catalyses the reaction N(4)-(alpha-D-Glc-(1-&gt;2)-alpha-D-Glc-(1-&gt;3)-alpha-D-Glc-(1-&gt;3)-alpha-D-Man-(1-&gt;2)-alpha-D-Man-(1-&gt;2)-alpha-D-Man-(1-&gt;3)-[alpha-D-Man-(1-&gt;2)-alpha-D-Man-(1-&gt;3)-[alpha-D-Man-(1-&gt;2)-alpha-D-Man-(1-&gt;6)]-alpha-D-Man-(1-&gt;6)]-beta-D-Man-(1-&gt;4)-beta-D-GlcNAc-(1-&gt;4)-beta-D-GlcNAc)-L-asparaginyl-[protein] + H2O = N(4)-(alpha-D-Glc-(1-&gt;3)-alpha-D-Glc-(1-&gt;3)-alpha-D-Man-(1-&gt;2)-alpha-D-Man-(1-&gt;2)-alpha-D-Man-(1-&gt;3)-[alpha-D-Man-(1-&gt;2)-alpha-D-Man-(1-&gt;3)-[alpha-D-Man-(1-&gt;2)-alpha-D-Man-(1-&gt;6)]-alpha-D-Man-(1-&gt;6)]-beta-D-Man-(1-&gt;4)-beta-D-GlcNAc-(1-&gt;4)-beta-D-GlcNAc)-L-asparaginyl-[protein] + beta-D-glucose. Its pathway is glycan metabolism; N-glycan degradation. Miglitol is an effective inhibitor at 1 mM. Its function is as follows. Cleaves the distal alpha 1,2-linked glucose residue from the Glc(3)Man(9)GlcNAc(2) oligosaccharide precursor highly specifically. Seems to play a role in beta-1,6-glucan synthesis. The chain is Mannosyl-oligosaccharide glucosidase (CWH41) from Saccharomyces cerevisiae (strain ATCC 204508 / S288c) (Baker's yeast).